The chain runs to 163 residues: Probable chemoreceptor glutamine deamidase CheD (163 aa).

It belongs to the CheD family.

The catalysed reaction is L-glutaminyl-[protein] + H2O = L-glutamyl-[protein] + NH4(+). Probably deamidates glutamine residues to glutamate on methyl-accepting chemotaxis receptors (MCPs), playing an important role in chemotaxis. The polypeptide is Probable chemoreceptor glutamine deamidase CheD (Borrelia garinii subsp. bavariensis (strain ATCC BAA-2496 / DSM 23469 / PBi) (Borreliella bavariensis)).